Reading from the N-terminus, the 364-residue chain is Trans-enoyl reductase sthE (364 aa).

NADP(+) is bound at residue T51–K54. W137–I144 contributes to the substrate binding site. NADP(+) contacts are provided by residues A172–T175, S195–S198, Y213, and L261–E262. G281–Q285 lines the substrate pocket. V351–K352 lines the NADP(+) pocket.

It belongs to the zinc-containing alcohol dehydrogenase family. In terms of assembly, monomer.

The catalysed reaction is 7 malonyl-CoA + acetyl-CoA + 10 AH2 + 5 S-adenosyl-L-methionine + 2 H(+) = dehydroprobetaenone I + 10 A + 5 S-adenosyl-L-homocysteine + 7 CO2 + 8 CoA + 6 H2O. It participates in mycotoxin biosynthesis. In terms of biological role, trans-enoyl reductase; part of the gene cluster that mediates the biosynthesis of the phytotoxin stemphyloxin II. The first step of the pathway is the synthesis of dehydroprobetaenone I by the polyketide synthase sthA and the enoyl reductase sthE via condensation of one acetyl-CoA starter unit with 7 malonyl-CoA units and 5 methylations. The C-terminal reductase (R) domain of sthA catalyzes the reductive release of the polyketide chain. Because sthA lacks a designated enoylreductase (ER) domain, the required activity is provided the enoyl reductase sthE. The short-chain dehydrogenase/reductase sthC then catalyzes reduction of dehydroprobetaenone I to probetaenone I. The cytochrome P450 monooxygenase sthF catalyzes successive epoxidation, oxidation (resulting from epoxide opening) and hydroxylation to install a tertiary alcohol in the decaline ring to yield betaenone C from dehydroprobetaenone I and betaenone B from probetaenone I. The FAD-linked oxidoreductase sthB is responsible for the conversion of betaenone C to betaenone A via an intramolecular aldol reaction between C-1 and C-17 to form the bridged tricyclic system in betaenone A. Finally, the cytochrome P450 monooxygenase sthD catalyzes the hydroxylation of C-15 to afford the final metabolite stemphyloxin II. The protein is Trans-enoyl reductase sthE of Phaeosphaeria nodorum (strain SN15 / ATCC MYA-4574 / FGSC 10173) (Glume blotch fungus).